Reading from the N-terminus, the 207-residue chain is Cytidylyl-2-hydroxypropylphosphonate hydrolase (207 aa).

CDP contacts are provided by W68, R74, Q76, and S77. A divalent metal cation is bound by residues N109, D125, E127, and D129. Position 142 (K142) interacts with CDP. K142 acts as the Proton donor in catalysis. D143 serves as a coordination point for a divalent metal cation.

The protein belongs to the FomD family. Requires Mn(2+) as cofactor. The cofactor is Co(2+).

It carries out the reaction cytidine 5'-({hydroxy[(S)-2-hydroxypropyl]phosphonoyl}phosphate) + H2O = (S)-2-hydroxypropylphosphonate + CMP + H(+). Its pathway is antibiotic biosynthesis; fosfomycin biosynthesis. Hydrolysis of (S)-HPP-CMP is inhibited by CDP. Functionally, involved in fosfomycin biosynthesis. Catalyzes the hydrolysis of cytidylyl (S)-2-hydroxypropylphosphonate ((S)-HPP-CMP) to give (S)-2-hydroxypropylphosphonate ((S)-HPP) and CMP. Can also hydrolyze (R)-HPP-CMP and cytidylyl 2-hydroxyethylphosphonate (HEP-CMP), which is a biosynthetic intermediate before C-methylation, but the catalytic efficiency is much higher with (S)-HPP-CMP. The polypeptide is Cytidylyl-2-hydroxypropylphosphonate hydrolase (Streptomyces fradiae (Streptomyces roseoflavus)).